The chain runs to 672 residues: DNA ligase (672 aa).

NAD(+)-binding positions include 34 to 38, 83 to 84, and Glu113; these read DSVYD and SL. The active-site N6-AMP-lysine intermediate is Lys115. The NAD(+) site is built by Arg136, Glu170, Lys286, and Lys310. The Zn(2+) site is built by Cys404, Cys407, Cys422, and Cys427. The region spanning 592–672 is the BRCT domain; the sequence is STDSSFNGLR…EFIQQMEEES (81 aa).

The protein belongs to the NAD-dependent DNA ligase family. LigA subfamily. Mg(2+) is required as a cofactor. Requires Mn(2+) as cofactor.

It carries out the reaction NAD(+) + (deoxyribonucleotide)n-3'-hydroxyl + 5'-phospho-(deoxyribonucleotide)m = (deoxyribonucleotide)n+m + AMP + beta-nicotinamide D-nucleotide.. In terms of biological role, DNA ligase that catalyzes the formation of phosphodiester linkages between 5'-phosphoryl and 3'-hydroxyl groups in double-stranded DNA using NAD as a coenzyme and as the energy source for the reaction. It is essential for DNA replication and repair of damaged DNA. The protein is DNA ligase of Ligilactobacillus salivarius (strain UCC118) (Lactobacillus salivarius).